Consider the following 386-residue polypeptide: Succinate--CoA ligase [ADP-forming] subunit beta (386 aa).

Residues 9 to 244 (KHILSRFGVS…YDEEIKEEIE (236 aa)) form the ATP-grasp domain. Residues Lys46, 53–55 (GRG), Glu99, Cys102, and Glu107 contribute to the ATP site. Residues Asn199 and Asp213 each contribute to the Mg(2+) site. Substrate-binding positions include Asn264 and 320 to 322 (GIM).

The protein belongs to the succinate/malate CoA ligase beta subunit family. As to quaternary structure, heterotetramer of two alpha and two beta subunits. Requires Mg(2+) as cofactor.

The enzyme catalyses succinate + ATP + CoA = succinyl-CoA + ADP + phosphate. It catalyses the reaction GTP + succinate + CoA = succinyl-CoA + GDP + phosphate. It functions in the pathway carbohydrate metabolism; tricarboxylic acid cycle; succinate from succinyl-CoA (ligase route): step 1/1. In terms of biological role, succinyl-CoA synthetase functions in the citric acid cycle (TCA), coupling the hydrolysis of succinyl-CoA to the synthesis of either ATP or GTP and thus represents the only step of substrate-level phosphorylation in the TCA. The beta subunit provides nucleotide specificity of the enzyme and binds the substrate succinate, while the binding sites for coenzyme A and phosphate are found in the alpha subunit. In Ehrlichia canis (strain Jake), this protein is Succinate--CoA ligase [ADP-forming] subunit beta.